Consider the following 317-residue polypeptide: MQILLANPRGFCAGVDRAISIVERAIEMYGAPIYVRHEVVHNRYVVESLCERGAIFIEEISEVPDGSILIFSAHGVSQAVRAEARSRNLTMLFDATCPLVTKVHMEVARASRKGKEAILIGHAGHPEVEGTMGQYSNPNGGMYLVESPDDVWQLSVKDENNLCFMTQTTLSVDDTSAVIDALNTRFPKIVGPRKDDICYATTNRQEAVRNLANDADIVLVVGSKNSSNSNRLAELVQRMGKPAYLIDSAADIQEFWLQGAKCIGVTAGASAPDILVQQVIARLKDLGAGESIELSGREENIVFEVPKELRVEVKQID.

Cys12 contributes to the [4Fe-4S] cluster binding site. Positions 41 and 74 each coordinate (2E)-4-hydroxy-3-methylbut-2-enyl diphosphate. His41 and His74 together coordinate dimethylallyl diphosphate. Isopentenyl diphosphate-binding residues include His41 and His74. [4Fe-4S] cluster is bound at residue Cys97. His125 is a binding site for (2E)-4-hydroxy-3-methylbut-2-enyl diphosphate. Dimethylallyl diphosphate is bound at residue His125. His125 provides a ligand contact to isopentenyl diphosphate. The active-site Proton donor is the Glu127. Thr168 contributes to the (2E)-4-hydroxy-3-methylbut-2-enyl diphosphate binding site. Cys198 serves as a coordination point for [4Fe-4S] cluster. Positions 226, 227, 228, and 270 each coordinate (2E)-4-hydroxy-3-methylbut-2-enyl diphosphate. Dimethylallyl diphosphate-binding residues include Ser226, Ser227, Asn228, and Ser270. Isopentenyl diphosphate is bound by residues Ser226, Ser227, Asn228, and Ser270.

Belongs to the IspH family. In terms of assembly, homodimer. It depends on [4Fe-4S] cluster as a cofactor.

It carries out the reaction isopentenyl diphosphate + 2 oxidized [2Fe-2S]-[ferredoxin] + H2O = (2E)-4-hydroxy-3-methylbut-2-enyl diphosphate + 2 reduced [2Fe-2S]-[ferredoxin] + 2 H(+). The enzyme catalyses dimethylallyl diphosphate + 2 oxidized [2Fe-2S]-[ferredoxin] + H2O = (2E)-4-hydroxy-3-methylbut-2-enyl diphosphate + 2 reduced [2Fe-2S]-[ferredoxin] + 2 H(+). It participates in isoprenoid biosynthesis; dimethylallyl diphosphate biosynthesis; dimethylallyl diphosphate from (2E)-4-hydroxy-3-methylbutenyl diphosphate: step 1/1. It functions in the pathway isoprenoid biosynthesis; isopentenyl diphosphate biosynthesis via DXP pathway; isopentenyl diphosphate from 1-deoxy-D-xylulose 5-phosphate: step 6/6. Catalyzes the conversion of 1-hydroxy-2-methyl-2-(E)-butenyl 4-diphosphate (HMBPP) into a mixture of isopentenyl diphosphate (IPP) and dimethylallyl diphosphate (DMAPP). Acts in the terminal step of the DOXP/MEP pathway for isoprenoid precursor biosynthesis. This Yersinia pseudotuberculosis serotype O:1b (strain IP 31758) protein is 4-hydroxy-3-methylbut-2-enyl diphosphate reductase.